Consider the following 616-residue polypeptide: Chaperone protein HscA (616 aa).

It belongs to the heat shock protein 70 family.

Chaperone involved in the maturation of iron-sulfur cluster-containing proteins. Has a low intrinsic ATPase activity which is markedly stimulated by HscB. Involved in the maturation of IscU. The protein is Chaperone protein HscA of Salmonella agona (strain SL483).